Reading from the N-terminus, the 146-residue chain is Protein U1 (146 aa).

Belongs to the nanovirus U1 protein family.

This Subterranean clover stunt virus (strain F) (SCSV) protein is Protein U1 (DNA-U1).